The sequence spans 373 residues: Potential protein lysine methyltransferase SET6 (373 aa).

The region spanning 12-338 is the SET domain; that stretch reads PFFQVRQTKW…KDEQICIDYS (327 aa).

The protein belongs to the class V-like SAM-binding methyltransferase superfamily.

Its function is as follows. Involved in resistance to compounds that target ergosterol biosynthesis, including fenpropimorph, dyclonine, and alverine citrate. Since a deletion in the absence of these compounds does not have an effect on growth, is more likely to be involved in compound availability. The protein is Potential protein lysine methyltransferase SET6 (SET6) of Saccharomyces cerevisiae (strain ATCC 204508 / S288c) (Baker's yeast).